A 92-amino-acid chain; its full sequence is Sugar fermentation stimulation protein B (92 aa).

Residues 50 to 69 constitute a DNA-binding region (H-T-H motif); it reads EMIIAKALGTDPWVIWPSRY.

It belongs to the ner transcriptional regulatory family.

Its function is as follows. This protein is involved in positive regulation of the metabolism of sugars. This chain is Sugar fermentation stimulation protein B (sfsB), found in Escherichia coli O157:H7.